A 117-amino-acid chain; its full sequence is Prefoldin subunit beta (117 aa).

Belongs to the prefoldin subunit beta family. In terms of assembly, heterohexamer of two alpha and four beta subunits.

It localises to the cytoplasm. In terms of biological role, molecular chaperone capable of stabilizing a range of proteins. Seems to fulfill an ATP-independent, HSP70-like function in archaeal de novo protein folding. This chain is Prefoldin subunit beta, found in Thermococcus kodakarensis (strain ATCC BAA-918 / JCM 12380 / KOD1) (Pyrococcus kodakaraensis (strain KOD1)).